Reading from the N-terminus, the 362-residue chain is GTPase Obg (362 aa).

The Obg domain occupies 1-159 (MKFIDEARIE…RKLKLELKVL (159 aa)). Positions 129–148 (HFKSSTNRAPRQKTNGKEGE) are disordered. Positions 130–141 (FKSSTNRAPRQK) are enriched in polar residues. The OBG-type G domain occupies 160 to 334 (ADVGLLGMPN…LCYALQDYLD (175 aa)). GTP contacts are provided by residues 166 to 173 (GMPNAGKS), 191 to 195 (FTTLH), 213 to 216 (DIPG), 284 to 287 (NKVD), and 315 to 317 (SAL). Mg(2+) is bound by residues Ser-173 and Thr-193. The segment at 340-362 (RDDAEERAADPRYQDQAADKSPD) is disordered.

Belongs to the TRAFAC class OBG-HflX-like GTPase superfamily. OBG GTPase family. Monomer. Mg(2+) serves as cofactor.

It localises to the cytoplasm. An essential GTPase which binds GTP, GDP and possibly (p)ppGpp with moderate affinity, with high nucleotide exchange rates and a fairly low GTP hydrolysis rate. Plays a role in control of the cell cycle, stress response, ribosome biogenesis and in those bacteria that undergo differentiation, in morphogenesis control. The polypeptide is GTPase Obg (Polynucleobacter asymbioticus (strain DSM 18221 / CIP 109841 / QLW-P1DMWA-1) (Polynucleobacter necessarius subsp. asymbioticus)).